We begin with the raw amino-acid sequence, 474 residues long: tRNA-2-methylthio-N(6)-dimethylallyladenosine synthase (474 aa).

The MTTase N-terminal domain maps to 3-120 (KKLHIKTWGC…LPEMINSVRG (118 aa)). Positions 12, 49, 83, 157, 161, and 164 each coordinate [4Fe-4S] cluster. A Radical SAM core domain is found at 143 to 375 (RAEGPTAFVS…QERINQQAMA (233 aa)). A TRAM domain is found at 378–441 (RRMLGTTQRI…PNSLRGKVVR (64 aa)).

This sequence belongs to the methylthiotransferase family. MiaB subfamily. In terms of assembly, monomer. [4Fe-4S] cluster is required as a cofactor.

The protein localises to the cytoplasm. It catalyses the reaction N(6)-dimethylallyladenosine(37) in tRNA + (sulfur carrier)-SH + AH2 + 2 S-adenosyl-L-methionine = 2-methylsulfanyl-N(6)-dimethylallyladenosine(37) in tRNA + (sulfur carrier)-H + 5'-deoxyadenosine + L-methionine + A + S-adenosyl-L-homocysteine + 2 H(+). Its function is as follows. Catalyzes the methylthiolation of N6-(dimethylallyl)adenosine (i(6)A), leading to the formation of 2-methylthio-N6-(dimethylallyl)adenosine (ms(2)i(6)A) at position 37 in tRNAs that read codons beginning with uridine. The polypeptide is tRNA-2-methylthio-N(6)-dimethylallyladenosine synthase (Escherichia coli (strain SE11)).